The following is a 286-amino-acid chain: tRNA dimethylallyltransferase (286 aa).

Positions 18 to 21 (DSMQ) are interaction with substrate tRNA.

The protein belongs to the IPP transferase family. As to quaternary structure, monomer. Mg(2+) is required as a cofactor.

It catalyses the reaction adenosine(37) in tRNA + dimethylallyl diphosphate = N(6)-dimethylallyladenosine(37) in tRNA + diphosphate. Its function is as follows. Catalyzes the transfer of a dimethylallyl group onto the adenine at position 37 in tRNAs that read codons beginning with uridine, leading to the formation of N6-(dimethylallyl)adenosine (i(6)A). The polypeptide is tRNA dimethylallyltransferase (Tropheryma whipplei (strain TW08/27) (Whipple's bacillus)).